Consider the following 161-residue polypeptide: Putative TRAP transporter small permease protein HI_1030 (161 aa).

4 helical membrane passes run 13–33 (LEILCISILALMSILVFLNVV), 51–71 (YLFIWLAFLGAVLAFNENQHV), 86–106 (AILKFITDMMMLICCYLIIEG), and 135–155 (IAGILVSAILITRLISTIFFI).

The protein belongs to the TRAP transporter small permease family.

Its subcellular location is the cell inner membrane. The protein is Putative TRAP transporter small permease protein HI_1030 of Haemophilus influenzae (strain ATCC 51907 / DSM 11121 / KW20 / Rd).